The sequence spans 907 residues: Phototropin-2 (907 aa).

Positions 28–84 (ATAGLEIVAEDAPSGSSGAHQQQAWRPVAPATAGRDSGGTGSGKSSVDGGVGRASHD) are disordered. Residues 41–51 (SGSSGAHQQQA) show a composition bias toward polar residues. One can recognise a PAS 1 domain in the interval 89–162 (VSQELKDALS…AKIRDAVKHG (74 aa)). Residues 138–143 (NCRFLQ), Arg-156, Asn-171, Asn-181, and Gln-202 contribute to the FMN site. The residue at position 139 (Cys-139) is an S-4a-FMN cysteine. Residues 163 to 217 (RSFCGRLLNYRKDGAPFWNLLTVTPIRDDNGKVIKFIGMQVEVSKYTEGLSDKRM) enclose the PAC 1 domain. The disordered stretch occupies residues 332 to 363 (RSSVGSREAPAVVEEPAPAPPPAPEVVERTDS). Residues 375–448 (QGIDLATTLE…DKIREAIREQ (74 aa)) enclose the PAS 2 domain. FMN is bound by residues 424 to 429 (NCRFLQ), Arg-442, Asn-457, Asn-467, and Gln-488. Position 425 is an S-4a-FMN cysteine (Cys-425). Residues 449–503 (KEITVQLINYTKSGKKFWNLFHLQPMRDQKGELQYFIGVQLDGSDHVEPLRNRLS) enclose the PAC 2 domain. The region spanning 576-863 (FKPVKPLGCG…ANDIKQHSFF (288 aa)) is the Protein kinase domain. ATP contacts are provided by residues 582-590 (LGCGDTGSV) and Lys-605. Residue Asp-701 is the Proton acceptor of the active site.

It belongs to the protein kinase superfamily. Ser/Thr protein kinase family. In terms of assembly, homodimer. The cofactor is FMN. Post-translationally, autophosphorylated in response to blue light irradiation. 2 molecules of FMN bind covalently to cysteines after exposure to blue light and are reversed in the dark. In terms of tissue distribution, expressed at low levels in leaves of dark-grown seedlings.

The enzyme catalyses L-seryl-[protein] + ATP = O-phospho-L-seryl-[protein] + ADP + H(+). It carries out the reaction L-threonyl-[protein] + ATP = O-phospho-L-threonyl-[protein] + ADP + H(+). In terms of biological role, protein kinase that acts as a blue light photoreceptor in a signal-transduction pathway for phototropic responses. Regulates a wide range of physiological activities in plants that maximize the efficiency of photosynthesis, such as chloroplast relocations, stomata opening, and leaf expansion. This Oryza sativa subsp. japonica (Rice) protein is Phototropin-2 (PHOT2).